The sequence spans 377 residues: Succinyl-diaminopimelate desuccinylase (377 aa).

Histidine 67 is a binding site for Zn(2+). Aspartate 69 is a catalytic residue. Aspartate 100 contacts Zn(2+). Glutamate 134 serves as the catalytic Proton acceptor. Positions 135, 163, and 349 each coordinate Zn(2+).

It belongs to the peptidase M20A family. DapE subfamily. Homodimer. Zn(2+) is required as a cofactor. It depends on Co(2+) as a cofactor.

The enzyme catalyses N-succinyl-(2S,6S)-2,6-diaminopimelate + H2O = (2S,6S)-2,6-diaminopimelate + succinate. The protein operates within amino-acid biosynthesis; L-lysine biosynthesis via DAP pathway; LL-2,6-diaminopimelate from (S)-tetrahydrodipicolinate (succinylase route): step 3/3. Its function is as follows. Catalyzes the hydrolysis of N-succinyl-L,L-diaminopimelic acid (SDAP), forming succinate and LL-2,6-diaminopimelate (DAP), an intermediate involved in the bacterial biosynthesis of lysine and meso-diaminopimelic acid, an essential component of bacterial cell walls. The chain is Succinyl-diaminopimelate desuccinylase from Shewanella frigidimarina (strain NCIMB 400).